The following is a 165-amino-acid chain: Protein OPG091 (165 aa).

This sequence belongs to the orthopoxvirus OPG091 family.

It is found in the virion. The protein localises to the host cytoplasm. In terms of biological role, contributes to virulence in host but not to replication in cell culture. The protein is Protein OPG091 (OPG091) of Variola virus (isolate Human/India/Ind3/1967) (VARV).